The following is a 238-amino-acid chain: 2-C-methyl-D-erythritol 4-phosphate cytidylyltransferase (238 aa).

It belongs to the IspD/TarI cytidylyltransferase family. IspD subfamily.

The catalysed reaction is 2-C-methyl-D-erythritol 4-phosphate + CTP + H(+) = 4-CDP-2-C-methyl-D-erythritol + diphosphate. It functions in the pathway isoprenoid biosynthesis; isopentenyl diphosphate biosynthesis via DXP pathway; isopentenyl diphosphate from 1-deoxy-D-xylulose 5-phosphate: step 2/6. Its function is as follows. Catalyzes the formation of 4-diphosphocytidyl-2-C-methyl-D-erythritol from CTP and 2-C-methyl-D-erythritol 4-phosphate (MEP). This chain is 2-C-methyl-D-erythritol 4-phosphate cytidylyltransferase, found in Acinetobacter baumannii (strain ATCC 17978 / DSM 105126 / CIP 53.77 / LMG 1025 / NCDC KC755 / 5377).